Reading from the N-terminus, the 96-residue chain is UPF0251 protein Shal_3723 (96 aa).

The protein belongs to the UPF0251 family.

The protein is UPF0251 protein Shal_3723 of Shewanella halifaxensis (strain HAW-EB4).